Reading from the N-terminus, the 296-residue chain is Porphobilinogen deaminase (296 aa).

The residue at position 235 (cysteine 235) is an S-(dipyrrolylmethanemethyl)cysteine.

This sequence belongs to the HMBS family. As to quaternary structure, monomer. It depends on dipyrromethane as a cofactor.

The catalysed reaction is 4 porphobilinogen + H2O = hydroxymethylbilane + 4 NH4(+). It functions in the pathway porphyrin-containing compound metabolism; protoporphyrin-IX biosynthesis; coproporphyrinogen-III from 5-aminolevulinate: step 2/4. Functionally, tetrapolymerization of the monopyrrole PBG into the hydroxymethylbilane pre-uroporphyrinogen in several discrete steps. This is Porphobilinogen deaminase from Alkaliphilus oremlandii (strain OhILAs) (Clostridium oremlandii (strain OhILAs)).